A 172-amino-acid polypeptide reads, in one-letter code: Putative phosphoesterase BCE_1348 (172 aa).

His-34 serves as the catalytic Proton donor. 2 consecutive short sequence motifs (HXTX) follow at residues 34-37 and 115-118; these read HITL and HLTI. The active-site Proton acceptor is His-115.

It belongs to the 2H phosphoesterase superfamily. YjcG family.

This chain is Putative phosphoesterase BCE_1348, found in Bacillus cereus (strain ATCC 10987 / NRS 248).